Reading from the N-terminus, the 428-residue chain is MSAIVDIFAREILDSRGNPTVECDVLLESGVMGRAAVPSGASTGQKEALELRDGDKSRYSGKGVLKAVEHVNNQIAQALIGIDANEQSYIDQIMIELDGTENKGNLGANATLAVSMAVARAAAEDSGLPLYRYLGGAGPMSLPVPMMNVINGGEHANNSLNIQEFMIMPVGAKSFREALRCGAEIFHALKKLCDSKGFPTTVGDEGGFAPNLNSHKEALQLMVEATEAAGYKAGEDVLFALDCASSEFYKDGKYHLEAEGRSYTNAEFAEYLEGLVNEFPIISIEDGMDENDWEGWKLLTEKLGGRVQLVGDDLFVTNPKILAEGIEKGVANALLVKVNQIGTLSETLKAVDLAKRNRYASVMSHRSGETEDSTIADLAVATNCMQIKTGSLSRSDRMAKYNQLLRIEEELAEAADYPSKAAFYQLGK.

Gln163 is a (2R)-2-phosphoglycerate binding site. Glu205 (proton donor) is an active-site residue. The Mg(2+) site is built by Asp242, Glu285, and Asp312. 4 residues coordinate (2R)-2-phosphoglycerate: Lys337, Arg366, Ser367, and Lys388. Lys337 functions as the Proton acceptor in the catalytic mechanism.

The protein belongs to the enolase family. Requires Mg(2+) as cofactor.

It is found in the cytoplasm. The protein resides in the secreted. It localises to the cell surface. It catalyses the reaction (2R)-2-phosphoglycerate = phosphoenolpyruvate + H2O. It functions in the pathway carbohydrate degradation; glycolysis; pyruvate from D-glyceraldehyde 3-phosphate: step 4/5. In terms of biological role, catalyzes the reversible conversion of 2-phosphoglycerate (2-PG) into phosphoenolpyruvate (PEP). It is essential for the degradation of carbohydrates via glycolysis. This is Enolase from Neisseria meningitidis serogroup B (strain ATCC BAA-335 / MC58).